The chain runs to 369 residues: Prenyltransferase malB (369 aa).

Position 87 (Glu87) interacts with substrate. Dimethylallyl diphosphate contacts are provided by Arg100 and Tyr189. Substrate is bound at residue Tyr191.

The protein belongs to the tryptophan dimethylallyltransferase family.

Its function is as follows. Prenyltransferase; part of the gene cluster that mediates the biosynthesis of malbrancheamide, a dichlorinated fungal indole alkaloid that belongs to a family of natural products containing a characteristic bicyclo[2.2.2]diazaoctane core. The first step of malbrancheamide biosynthesis involves coupling of L-proline and L-tryptophan by malG, a bimodular NRPS, to produce L-Pro-L-Trp aldehyde through reductive offloading. This compound undergoes spontaneous cyclization and dehydration to give a dienamine which is reverse prenylated at C-2 by malE. The other prenyltransferase present in the cluster, malB, displays modest activity, suggesting that may be a redundant gene in the pathway. Subsequently, a [4+2] Diels-Alder cyclo-addition catalyzed by the bifunctional enzyme malC forms the characteristic bicyclo[2.2.2]diazaoctane ring of premalbrancheamid. Finally, the flavin-dependent halogenase malA catalyzes the iterative dichlorination of the indole ring of premalbrancheamide to yield C-9 monochlorinated malbrancheamide B, C-8 monochlorinated isomalbrancheamide B, and dichlorinated malbrancheamide. MalA is also able to brominate premalbrancheamide at C-9 to yield malbrancheamide C, and, to a lesser extend, at C-8 to yield isomalbrancheamide C. Finally, malA can brominate C-9 monochlorinated malbrancheamide B at C-8 to yield malbrancheamide D, or C-8 monochlorinated isomalbrancheamide B at C-9 to produce isomalbrancheamide D. The sequence is that of Prenyltransferase malB from Malbranchea aurantiaca.